Consider the following 844-residue polypeptide: Serrate RNA effector molecule homolog B (844 aa).

Disordered regions lie at residues 1–90 (MADS…HGSD), 277–401 (EAAK…PRPL), 555–575 (ELLS…GNPT), and 794–825 (PNPY…MRGD). Basic and acidic residues-rich tracts occupy residues 16–73 (FRRE…RHDI) and 277–337 (EAAK…ETRK). The segment covering 349–359 (SDDGSDSESDT) has biased composition (acidic residues). Positions 376–397 (DTPKKEEETEKPKEKPKEDTVK) are enriched in basic and acidic residues.

Belongs to the ARS2 family. Interacts ncbp1/cbp80.

It is found in the nucleus. The protein resides in the nucleoplasm. It localises to the cytoplasm. Its function is as follows. Acts as a mediator between the cap-binding complex (CBC) and the primary microRNAs (miRNAs) processing machinery during cell proliferation. Contributes to the stability and delivery of capped primary miRNA transcripts to the primary miRNA processing complex, thereby playing a role in RNA-mediated gene silencing (RNAi) by miRNAs. The polypeptide is Serrate RNA effector molecule homolog B (srrt-b) (Xenopus laevis (African clawed frog)).